A 411-amino-acid polypeptide reads, in one-letter code: Tyrosine--tRNA ligase (411 aa).

A 'HIGH' region motif is present at residues 48-57 (PTAPDIHLGH). Residues 232 to 236 (KMSKS) carry the 'KMSKS' region motif. ATP is bound at residue Lys235. In terms of domain architecture, S4 RNA-binding spans 347–409 (VLLPKVLFSA…GKRRFLKIIF (63 aa)).

It belongs to the class-I aminoacyl-tRNA synthetase family. TyrS type 2 subfamily. Homodimer.

It is found in the cytoplasm. The catalysed reaction is tRNA(Tyr) + L-tyrosine + ATP = L-tyrosyl-tRNA(Tyr) + AMP + diphosphate + H(+). Functionally, catalyzes the attachment of tyrosine to tRNA(Tyr) in a two-step reaction: tyrosine is first activated by ATP to form Tyr-AMP and then transferred to the acceptor end of tRNA(Tyr). The chain is Tyrosine--tRNA ligase from Carboxydothermus hydrogenoformans (strain ATCC BAA-161 / DSM 6008 / Z-2901).